A 776-amino-acid polypeptide reads, in one-letter code: Endonuclease MutS2 (776 aa).

330–337 lines the ATP pocket; sequence GPNTGGKT. One can recognise a Smr domain in the interval 701-776; the sequence is LDLRGMRYEE…GSGATIAILK (76 aa).

It belongs to the DNA mismatch repair MutS family. MutS2 subfamily. As to quaternary structure, homodimer. Binds to stalled ribosomes, contacting rRNA.

Its function is as follows. Endonuclease that is involved in the suppression of homologous recombination and thus may have a key role in the control of bacterial genetic diversity. In terms of biological role, acts as a ribosome collision sensor, splitting the ribosome into its 2 subunits. Detects stalled/collided 70S ribosomes which it binds and splits by an ATP-hydrolysis driven conformational change. Acts upstream of the ribosome quality control system (RQC), a ribosome-associated complex that mediates the extraction of incompletely synthesized nascent chains from stalled ribosomes and their subsequent degradation. Probably generates substrates for RQC. The protein is Endonuclease MutS2 of Lactococcus lactis subsp. cremoris (strain MG1363).